The primary structure comprises 447 residues: N-succinylarginine dihydrolase (447 aa).

Residues 19–28 (AGLSFGNEAS), Asn-110, and 137–138 (HR) each bind substrate. The active site involves Glu-174. Position 214 (Arg-214) interacts with substrate. The active site involves His-250. The substrate site is built by Asp-252 and Asn-365. The active-site Nucleophile is Cys-371.

The protein belongs to the succinylarginine dihydrolase family. As to quaternary structure, homodimer.

It catalyses the reaction N(2)-succinyl-L-arginine + 2 H2O + 2 H(+) = N(2)-succinyl-L-ornithine + 2 NH4(+) + CO2. The protein operates within amino-acid degradation; L-arginine degradation via AST pathway; L-glutamate and succinate from L-arginine: step 2/5. In terms of biological role, catalyzes the hydrolysis of N(2)-succinylarginine into N(2)-succinylornithine, ammonia and CO(2). This Acinetobacter baumannii (strain ACICU) protein is N-succinylarginine dihydrolase.